A 356-amino-acid polypeptide reads, in one-letter code: L-lactate dehydrogenase A (356 aa).

Residues 75–80 (DALPDK) and arginine 121 contribute to the NAD(+) site. 3 residues coordinate substrate: arginine 128, asparagine 160, and arginine 191. NAD(+) is bound at residue asparagine 160. Histidine 215 (proton acceptor) is an active-site residue. A substrate-binding site is contributed by threonine 270.

The protein belongs to the LDH/MDH superfamily. LDH family. As to quaternary structure, tetramer that arise from random association of LDH-A and LDH-B.

The enzyme catalyses (S)-lactate + NAD(+) = pyruvate + NADH + H(+). The protein operates within fermentation; pyruvate fermentation to lactate; (S)-lactate from pyruvate: step 1/1. The sequence is that of L-lactate dehydrogenase A from Hordeum vulgare (Barley).